The chain runs to 469 residues: Protein DETOXIFICATION 18 (469 aa).

The next 12 helical transmembrane spans lie at 40–60, 73–93, 121–141, 152–172, 183–203, 206–226, 252–274, 293–313, 344–364, 374–394, 406–426, and 438–458; these read LPMIFTNLFYYCIPLTSVMFA, LANSWATVTGFAFMTGLSGAL, LVFTILITILWFFTESVFLLL, ALYMKYLAPGLLAYGFLQNIL, PLVLFSFLPLVINIGTTYALV, AGLGFIGAPIATSISLWIAFV, HVVLNLTLSIPSAAMVCLEYWAF, LVAICVNTESISYMLTCGLSA, VLALGVVIAILVGHDAWVGLF, FASLRFFLAASITLDSIQGVL, LATVINLGTFYLIGMPISVLC, and WIGLICGMFCQSASLLLMTIF.

It belongs to the multi antimicrobial extrusion (MATE) (TC 2.A.66.1) family.

The protein resides in the membrane. This Arabidopsis thaliana (Mouse-ear cress) protein is Protein DETOXIFICATION 18.